The following is a 184-amino-acid chain: Fe/S biogenesis protein NfuA (184 aa).

C142 and C145 together coordinate [4Fe-4S] cluster.

This sequence belongs to the NfuA family. In terms of assembly, homodimer. The cofactor is [4Fe-4S] cluster.

In terms of biological role, involved in iron-sulfur cluster biogenesis. Binds a 4Fe-4S cluster, can transfer this cluster to apoproteins, and thereby intervenes in the maturation of Fe/S proteins. Could also act as a scaffold/chaperone for damaged Fe/S proteins. This is Fe/S biogenesis protein NfuA from Wigglesworthia glossinidia brevipalpis.